The sequence spans 822 residues: Microcephalin (822 aa).

The region spanning 10–99 (AFLKDVVAYV…ALVDESLFPA (90 aa)) is the BRCT 1 domain. 3 disordered regions span residues 182–203 (MKEK…SQQN), 219–243 (PLSS…DQER), and 266–295 (SSFY…ESIN). 2 stretches are compositionally biased toward polar residues: residues 189–203 (LSPT…SQQN) and 219–235 (PLSS…SSFG). Phosphoserine is present on residues Ser273, Ser290, and Ser327. Thr329 carries the post-translational modification Phosphothreonine. Disordered regions lie at residues 335-366 (EHQV…LKKR), 498-567 (NDSP…SPED), and 594-636 (TGYS…PTRT). Over residues 522–541 (HPDTLSSSAHHITPLKGNST) the composition is skewed to polar residues. Basic and acidic residues-rich tracts occupy residues 542-553 (ETRDPGDGKGSP) and 625-634 (KKSEKEEKPT). BRCT domains follow at residues 627-717 (SEKE…PFEL) and 738-820 (YQGT…NYQL).

In terms of assembly, interacts with CDC27 and maybe other components of the APC/C complex. Interacts with histone variant H2AX under DNA damage conditions. High levels of expression are found in the developing forebrain and, in particular, in the walls of the lateral ventricles.

Its subcellular location is the cytoplasm. The protein localises to the cytoskeleton. The protein resides in the microtubule organizing center. It localises to the centrosome. Implicated in chromosome condensation and DNA damage induced cellular responses. May play a role in neurogenesis and regulation of the size of the cerebral cortex. The protein is Microcephalin of Mus musculus (Mouse).